A 1635-amino-acid chain; its full sequence is U3 small nucleolar RNA-associated protein 10 (1635 aa).

The interval 781 to 803 (TTSMDAPSDESTKRRRRSSSSTV) is disordered. 2 consecutive transmembrane segments (helical) span residues 1141-1161 (PELL…TVAG) and 1288-1308 (IALS…SFMV).

This sequence belongs to the HEATR1/UTP10 family. In terms of assembly, component of the ribosomal small subunit (SSU) processome.

Its subcellular location is the nucleus. It is found in the nucleolus. The protein resides in the membrane. Functionally, involved in nucleolar processing of pre-18S ribosomal RNA. Involved in ribosome biosynthesis. The protein is U3 small nucleolar RNA-associated protein 10 of Yarrowia lipolytica (strain CLIB 122 / E 150) (Yeast).